The chain runs to 201 residues: Small ribosomal subunit protein uS4 (201 aa).

Residues 1 to 46 form a disordered region; the sequence is MARYTGPRSRISRRFGEPVMGDSKALQKKNYAPGMHGRNKKRKQSE. Residues 92–151 enclose the S4 RNA-binding domain; that stretch reads ARLDNTVYRLGIASSRRAARQLVIHKHIVVNGDVVNIPSYQLKPGDQLGVREKSKSIEAI.

It belongs to the universal ribosomal protein uS4 family. In terms of assembly, part of the 30S ribosomal subunit. Contacts protein S5. The interaction surface between S4 and S5 is involved in control of translational fidelity.

Its function is as follows. One of the primary rRNA binding proteins, it binds directly to 16S rRNA where it nucleates assembly of the body of the 30S subunit. With S5 and S12 plays an important role in translational accuracy. This Cytophaga hutchinsonii (strain ATCC 33406 / DSM 1761 / CIP 103989 / NBRC 15051 / NCIMB 9469 / D465) protein is Small ribosomal subunit protein uS4.